Here is a 356-residue protein sequence, read N- to C-terminus: Cytochrome c oxidase subunit 2 (356 aa).

Positions 1–20 are cleaved as a signal peptide; the sequence is MVKHWRLILLLALVPLLLSG. A lipid anchor (N-palmitoyl cysteine) is attached at cysteine 21. The S-diacylglycerol cysteine moiety is linked to residue cysteine 21. Residues 21–47 lie on the Extracellular side of the membrane; it reads CGKPFLSTLKPAGEVADKQYDLTVLST. Residues 21–257 form a cytochrome c oxidase subunit II region; sequence CGKPFLSTLK…KNYKSTAESD (237 aa). A helical transmembrane segment spans residues 48-66; it reads LIMVVVVAVVSVIFFYVIV. Residues 67–87 lie on the Cytoplasmic side of the membrane; sequence RFRRSRVGENTIPKQVEGNKF. A helical transmembrane segment spans residues 88 to 106; the sequence is LEITWTVIPILLLIILVIP. Over 107-356 the chain is Extracellular; sequence VVLYTLELAD…YLKGLKAESK (250 aa). Positions 176, 217, 221, and 225 each coordinate Cu cation. Residues 258-356 form the Cytochrome c domain; it reads LAKQGEELFK…YLKGLKAESK (99 aa). Heme c is bound by residues cysteine 271, cysteine 274, histidine 275, and methionine 329.

This sequence belongs to the cytochrome c oxidase subunit 2 family. It depends on Cu cation as a cofactor. Heme c is required as a cofactor.

It is found in the cell membrane. The enzyme catalyses 4 Fe(II)-[cytochrome c] + O2 + 8 H(+)(in) = 4 Fe(III)-[cytochrome c] + 2 H2O + 4 H(+)(out). Functionally, subunits I and II form the functional core of the enzyme complex. Electrons originating in cytochrome c are transferred via heme a and Cu(A) to the binuclear center formed by heme a3 and Cu(B). The protein is Cytochrome c oxidase subunit 2 (ctaC) of Bacillus subtilis (strain 168).